Consider the following 1941-residue polypeptide: Myosin-7B (1941 aa).

In terms of domain architecture, Myosin N-terminal SH3-like spans 30-80 (DGKKRVWVPDEQDAYVEAEVKTEATGGKVTVETKDQKVLTVRETEMQPMNP). In terms of domain architecture, Myosin motor spans 84–785 (DLLEDMAMMT…LLGILEELRD (702 aa)). 177–184 (GESGAGKT) serves as a coordination point for ATP. Actin-binding stretches follow at residues 662 to 684 (LNKL…VPNE) and 764 to 778 (QFGH…GLLG). One can recognise an IQ domain in the interval 788–817 (LAKVLTLLQARSRGRLMRLEYQRMLGGRDA). The stretch at 846-1935 (LLRSAQAEEE…KLRARSRDAL (1090 aa)) forms a coiled coil. A disordered region spans residues 1887–1941 (RQFEEAEQQASTNLAKYRKAQHELDDAEERADMAETQANKLRARSRDALGPKHKE). The span at 1930–1941 (RSRDALGPKHKE) shows a compositional bias: basic and acidic residues.

Belongs to the TRAFAC class myosin-kinesin ATPase superfamily. Myosin family. Muscle myosin is a hexameric protein that consists of 2 heavy chain subunits (MHC), 2 alkali light chain subunits (MLC) and 2 regulatory light chain subunits (MLC-2).

It is found in the membrane. Functionally, involved in muscle contraction. The protein is Myosin-7B (Myh7b) of Mus musculus (Mouse).